The chain runs to 261 residues: MTHQTHAYHMVNPSPWPLTGALSALLMTSGLAMWFHFNSPSLLLIGLVTNTLTMYQWWRDIVREGTFQGHHTPIVQKGLRYGMILFIISEVFFFAGFFWAFYHSSLAPTPELGGCWPPTGINPLNPLEVPLLNTSVLLASGVSITWAHHSLMEGNRKNMQQALAITILLGIYFTLLQASEYYETSFTISDGVYGSTFFMATGFHGLHVIIGSTFLTVCLLRQFNFHFTSNHHFGFEAAAWYWHFVDVVWLFLYVSIYWWGS.

Topologically, residues 1 to 15 (MTHQTHAYHMVNPSP) are mitochondrial matrix. The chain crosses the membrane as a helical span at residues 16–34 (WPLTGALSALLMTSGLAMW). Topologically, residues 35–40 (FHFNSP) are mitochondrial intermembrane. The helical transmembrane segment at 41-66 (SLLLIGLVTNTLTMYQWWRDIVREGT) threads the bilayer. Residues 67-72 (FQGHHT) are Mitochondrial matrix-facing. Residues 73–105 (PIVQKGLRYGMILFIISEVFFFAGFFWAFYHSS) traverse the membrane as a helical segment. Topologically, residues 106 to 128 (LAPTPELGGCWPPTGINPLNPLE) are mitochondrial intermembrane. A helical membrane pass occupies residues 129–152 (VPLLNTSVLLASGVSITWAHHSLM). The Mitochondrial matrix segment spans residues 153–155 (EGN). Residues 156-183 (RKNMQQALAITILLGIYFTLLQASEYYE) traverse the membrane as a helical segment. Topologically, residues 184 to 190 (TSFTISD) are mitochondrial intermembrane. Residues 191-223 (GVYGSTFFMATGFHGLHVIIGSTFLTVCLLRQF) traverse the membrane as a helical segment. Residues 224–232 (NFHFTSNHH) lie on the Mitochondrial matrix side of the membrane. A helical membrane pass occupies residues 233–256 (FGFEAAAWYWHFVDVVWLFLYVSI). Topologically, residues 257–261 (YWWGS) are mitochondrial intermembrane.

It belongs to the cytochrome c oxidase subunit 3 family. As to quaternary structure, component of the cytochrome c oxidase (complex IV, CIV), a multisubunit enzyme composed of 14 subunits. The complex is composed of a catalytic core of 3 subunits MT-CO1, MT-CO2 and MT-CO3, encoded in the mitochondrial DNA, and 11 supernumerary subunits COX4I, COX5A, COX5B, COX6A, COX6B, COX6C, COX7A, COX7B, COX7C, COX8 and NDUFA4, which are encoded in the nuclear genome. The complex exists as a monomer or a dimer and forms supercomplexes (SCs) in the inner mitochondrial membrane with NADH-ubiquinone oxidoreductase (complex I, CI) and ubiquinol-cytochrome c oxidoreductase (cytochrome b-c1 complex, complex III, CIII), resulting in different assemblies (supercomplex SCI(1)III(2)IV(1) and megacomplex MCI(2)III(2)IV(2)).

It is found in the mitochondrion inner membrane. It carries out the reaction 4 Fe(II)-[cytochrome c] + O2 + 8 H(+)(in) = 4 Fe(III)-[cytochrome c] + 2 H2O + 4 H(+)(out). Functionally, component of the cytochrome c oxidase, the last enzyme in the mitochondrial electron transport chain which drives oxidative phosphorylation. The respiratory chain contains 3 multisubunit complexes succinate dehydrogenase (complex II, CII), ubiquinol-cytochrome c oxidoreductase (cytochrome b-c1 complex, complex III, CIII) and cytochrome c oxidase (complex IV, CIV), that cooperate to transfer electrons derived from NADH and succinate to molecular oxygen, creating an electrochemical gradient over the inner membrane that drives transmembrane transport and the ATP synthase. Cytochrome c oxidase is the component of the respiratory chain that catalyzes the reduction of oxygen to water. Electrons originating from reduced cytochrome c in the intermembrane space (IMS) are transferred via the dinuclear copper A center (CU(A)) of subunit 2 and heme A of subunit 1 to the active site in subunit 1, a binuclear center (BNC) formed by heme A3 and copper B (CU(B)). The BNC reduces molecular oxygen to 2 water molecules using 4 electrons from cytochrome c in the IMS and 4 protons from the mitochondrial matrix. The chain is Cytochrome c oxidase subunit 3 (MT-CO3) from Oryctolagus cuniculus (Rabbit).